The following is a 390-amino-acid chain: uncharacterized protein (390 aa).

The next 11 helical transmembrane spans lie at 7-27 (IYIL…ISGI), 35-55 (LGIT…VYAL), 77-97 (LGLF…GWFI), 101-121 (IIMA…AAKI), 128-148 (GSAI…GVPL), 161-181 (VFGA…FTLP), 203-223 (VAMG…AYTY), 238-258 (LLSG…KFGG), 281-301 (LILL…LILW), 335-355 (MQFA…NVSL), and 357-377 (SITW…LLIF).

This sequence belongs to the major facilitator superfamily.

The protein resides in the cell membrane. This is an uncharacterized protein from Bacillus subtilis (strain 168).